The chain runs to 120 residues: Fumarate reductase subunit D (120 aa).

3 helical membrane passes run 25 to 45, 57 to 77, and 100 to 120; these read FAML…LGIL, GFVT…LPMW, and IACY…VFMI.

This sequence belongs to the FrdD family. As to quaternary structure, part of an enzyme complex containing four subunits: a flavoprotein (FrdA), an iron-sulfur protein (FrdB), and two hydrophobic anchor proteins (FrdC and FrdD).

It is found in the cell inner membrane. Its function is as follows. Anchors the catalytic components of the fumarate reductase complex to the cell membrane, binds quinones. The sequence is that of Fumarate reductase subunit D from Photobacterium profundum (strain SS9).